Consider the following 212-residue polypeptide: MFTSYGYSTMIKVFLLCLAISAAALIFPLWAQIPIHLTTGLALLFTLYFFRDPKRVAPDEKRIILAPADGKILLVQKQNGNIAGKTSTLVSIFMSPLNVHVNRVPLSGKVTRLHYRPGQFLMAFDNRSMESNEKMEIGINNGEIEVQFSQVSGFLARRIVCQLQKGENVKLGNRFGMIKFGSRVDLILPPSATVLLQPGQRTRAGETILARY.

The Schiff-base intermediate with substrate; via pyruvic acid role is filled by Ser-182. Residue Ser-182 is modified to Pyruvic acid (Ser); by autocatalysis.

It belongs to the phosphatidylserine decarboxylase family. PSD-A subfamily. Heterodimer of a large membrane-associated beta subunit and a small pyruvoyl-containing alpha subunit. Pyruvate is required as a cofactor. In terms of processing, is synthesized initially as an inactive proenzyme. Formation of the active enzyme involves a self-maturation process in which the active site pyruvoyl group is generated from an internal serine residue via an autocatalytic post-translational modification. Two non-identical subunits are generated from the proenzyme in this reaction, and the pyruvate is formed at the N-terminus of the alpha chain, which is derived from the carboxyl end of the proenzyme. The post-translation cleavage follows an unusual pathway, termed non-hydrolytic serinolysis, in which the side chain hydroxyl group of the serine supplies its oxygen atom to form the C-terminus of the beta chain, while the remainder of the serine residue undergoes an oxidative deamination to produce ammonia and the pyruvoyl prosthetic group on the alpha chain.

It localises to the cell membrane. It catalyses the reaction a 1,2-diacyl-sn-glycero-3-phospho-L-serine + H(+) = a 1,2-diacyl-sn-glycero-3-phosphoethanolamine + CO2. Its pathway is phospholipid metabolism; phosphatidylethanolamine biosynthesis; phosphatidylethanolamine from CDP-diacylglycerol: step 2/2. Its function is as follows. Catalyzes the formation of phosphatidylethanolamine (PtdEtn) from phosphatidylserine (PtdSer). The chain is Phosphatidylserine decarboxylase proenzyme from Pelodictyon phaeoclathratiforme (strain DSM 5477 / BU-1).